The following is a 576-amino-acid chain: Arginine--tRNA ligase (576 aa).

The short motif at 126-136 (ANPTGPMHIGH) is the 'HIGH' region element.

This sequence belongs to the class-I aminoacyl-tRNA synthetase family. In terms of assembly, monomer.

The protein resides in the cytoplasm. It carries out the reaction tRNA(Arg) + L-arginine + ATP = L-arginyl-tRNA(Arg) + AMP + diphosphate. This is Arginine--tRNA ligase from Rickettsia peacockii (strain Rustic).